Reading from the N-terminus, the 436-residue chain is Chromosomal replication initiator protein DnaA (436 aa).

Residues 1 to 80 (MSHEAVWQHV…QAPRFELRVV (80 aa)) form a domain I, interacts with DnaA modulators region. The segment at 80–100 (VPGVVVQEDIFQAAPAEAPRP) is domain II. The segment at 101–317 (KLNPKYTFEN…GALMRAIAFA (217 aa)) is domain III, AAA+ region. Positions 145, 147, 148, and 149 each coordinate ATP. The segment at 318 to 436 (SLNGVELTRA…LLRTLREACT (119 aa)) is domain IV, binds dsDNA.

This sequence belongs to the DnaA family. As to quaternary structure, oligomerizes as a right-handed, spiral filament on DNA at oriC.

Its subcellular location is the cytoplasm. Functionally, plays an essential role in the initiation and regulation of chromosomal replication. ATP-DnaA binds to the origin of replication (oriC) to initiate formation of the DNA replication initiation complex once per cell cycle. Binds the DnaA box (a 9 base pair repeat at the origin) and separates the double-stranded (ds)DNA. Forms a right-handed helical filament on oriC DNA; dsDNA binds to the exterior of the filament while single-stranded (ss)DNA is stabiized in the filament's interior. The ATP-DnaA-oriC complex binds and stabilizes one strand of the AT-rich DNA unwinding element (DUE), permitting loading of DNA polymerase. After initiation quickly degrades to an ADP-DnaA complex that is not apt for DNA replication. Binds acidic phospholipids. The chain is Chromosomal replication initiator protein DnaA from Thermus thermophilus (strain ATCC BAA-163 / DSM 7039 / HB27).